The primary structure comprises 490 residues: ATP synthase subunit beta, plastid (490 aa).

Position 170-177 (170-177 (GGAGVGKT)) interacts with ATP.

This sequence belongs to the ATPase alpha/beta chains family. As to quaternary structure, F-type ATPases have 2 components, CF(1) - the catalytic core - and CF(0) - the membrane proton channel. CF(1) has five subunits: alpha(3), beta(3), gamma(1), delta(1), epsilon(1). CF(0) has four main subunits: a(1), b(1), b'(1) and c(9-12).

Its subcellular location is the plastid membrane. The catalysed reaction is ATP + H2O + 4 H(+)(in) = ADP + phosphate + 5 H(+)(out). In terms of biological role, produces ATP from ADP in the presence of a proton gradient across the membrane. The catalytic sites are hosted primarily by the beta subunits. This Cuscuta exaltata (Tall dodder) protein is ATP synthase subunit beta, plastid.